Here is a 395-residue protein sequence, read N- to C-terminus: Octopamine receptor beta-2R (395 aa).

Over 1-42 the chain is Extracellular; the sequence is MDPINGSHSGANATISDITNGAYNATDAGEWTSSVMFKLRTC. Asn-5, Asn-12, and Asn-24 each carry an N-linked (GlcNAc...) asparagine glycan. Residues 43–63 traverse the membrane as a helical segment; the sequence is VLLLIVIMAVLGNMLVIVSVM. Topologically, residues 64–74 are cytoplasmic; it reads RHRKLRVITNY. Residues 75 to 95 form a helical membrane-spanning segment; sequence FVVSLAFADILVAMVVMPFNF. The Extracellular portion of the chain corresponds to 96 to 117; the sequence is SVQFNQGWVFGETICDLWNSSD. Asn-114 is a glycosylation site (N-linked (GlcNAc...) asparagine). The chain crosses the membrane as a helical span at residues 118–140; that stretch reads VYFTSTSILHLCCISVDRYYAIV. Topologically, residues 141 to 154 are cytoplasmic; it reads KPLKYPIKMTKKMA. Residues 155–175 form a helical membrane-spanning segment; the sequence is FVMLAATWLSPITISYVPIFM. The Extracellular segment spans residues 176-202; that stretch reads GWYTTTDFLESRRDDQCEFKVNKPYAV. The helical transmembrane segment at 203–223 threads the bilayer; that stretch reads ISSSISFWIPCTIMIFTYLAI. The Cytoplasmic portion of the chain corresponds to 224 to 282; the sequence is FKEANRQEKALHARAGNAMLMHRHSREVSDKNGALHINATTPTKDRNLLKMKREHKAAR. The helical transmembrane segment at 283 to 303 threads the bilayer; the sequence is TLGIIMGAFILCWLPFFLYYV. The Extracellular portion of the chain corresponds to 304–315; that stretch reads STSLCDSCNCPE. Residues 316–336 form a helical membrane-spanning segment; that stretch reads VVTVIMFWTGYFNSALNPIIY. Topologically, residues 337 to 395 are cytoplasmic; sequence AYFNRDFRNAFKNTLACAFCSFCKRSASDLDAMERLDRRGSAQLRVPIPSRRASDLASL.

This sequence belongs to the G-protein coupled receptor 1 family.

The protein localises to the cell membrane. Its function is as follows. Autoreceptor for octopamine, which is a neurotransmitter, neurohormone, and neuromodulator in invertebrates. Also acts as a receptor for tyramine, but with much less potency. The activity of this receptor is mediated by G proteins which activate adenylyl cyclase. The chain is Octopamine receptor beta-2R from Chilo suppressalis (Asiatic rice borer moth).